A 933-amino-acid chain; its full sequence is Protein translocase subunit SecA (933 aa).

ATP contacts are provided by residues glutamine 87, 105–109 (GEGKT), and aspartate 515. 3 disordered regions span residues 567-588 (ESRR…PGSS), 840-861 (DVEA…RHAA), and 880-933 (AAAE…CGKL). Residues 845-856 (EEQRRQEAERMQ) show a composition bias toward basic and acidic residues. Low complexity predominate over residues 880–897 (AAAEGDSAPTGGAQQQSA). Over residues 905 to 914 (VAREGPKVGR) the composition is skewed to basic and acidic residues. The Zn(2+) site is built by cysteine 918, cysteine 920, cysteine 929, and cysteine 930. Residues 924–933 (KKYKHCCGKL) are compositionally biased toward basic residues.

The protein belongs to the SecA family. In terms of assembly, monomer and homodimer. Part of the essential Sec protein translocation apparatus which comprises SecA, SecYEG and auxiliary proteins SecDF-YajC and YidC. Requires Zn(2+) as cofactor.

The protein resides in the cell inner membrane. Its subcellular location is the cytoplasm. It catalyses the reaction ATP + H2O + cellular proteinSide 1 = ADP + phosphate + cellular proteinSide 2.. Its function is as follows. Part of the Sec protein translocase complex. Interacts with the SecYEG preprotein conducting channel. Has a central role in coupling the hydrolysis of ATP to the transfer of proteins into and across the cell membrane, serving both as a receptor for the preprotein-SecB complex and as an ATP-driven molecular motor driving the stepwise translocation of polypeptide chains across the membrane. The sequence is that of Protein translocase subunit SecA from Halorhodospira halophila (strain DSM 244 / SL1) (Ectothiorhodospira halophila (strain DSM 244 / SL1)).